We begin with the raw amino-acid sequence, 138 residues long: NADH-quinone oxidoreductase subunit A 1 (138 aa).

Transmembrane regions (helical) follow at residues 19–39 (FLPLALYTVAATVLIGVLLLA), 74–94 (FYLIAIFFIVFDVEAAFIFAW), and 103–123 (LAGLIHITFFIVILLLGLVWL).

This sequence belongs to the complex I subunit 3 family. NDH-1 is composed of 14 different subunits. Subunits NuoA, H, J, K, L, M, N constitute the membrane sector of the complex.

It localises to the cell inner membrane. It catalyses the reaction a quinone + NADH + 5 H(+)(in) = a quinol + NAD(+) + 4 H(+)(out). Its function is as follows. NDH-1 shuttles electrons from NADH, via FMN and iron-sulfur (Fe-S) centers, to quinones in the respiratory chain. The immediate electron acceptor for the enzyme in this species is believed to be ubiquinone. Couples the redox reaction to proton translocation (for every two electrons transferred, four hydrogen ions are translocated across the cytoplasmic membrane), and thus conserves the redox energy in a proton gradient. The chain is NADH-quinone oxidoreductase subunit A 1 from Geobacter metallireducens (strain ATCC 53774 / DSM 7210 / GS-15).